Here is a 217-residue protein sequence, read N- to C-terminus: Fucoxanthin-chlorophyll a-c binding protein A, chloroplastic (217 aa).

The transit peptide at 1–39 (MKSAVMAVACAAAPGLRRPSAFNGAALTTSAKSSSAMKM) directs the protein to the chloroplast. The next 3 membrane-spanning stretches (helical) occupy residues 81–101 (IAML…PGML), 122–142 (IPPA…LAVM), and 183–203 (GRAA…NNKP).

This sequence belongs to the fucoxanthin chlorophyll protein family. As to quaternary structure, the LHC complex of chromophytic algae is composed of fucoxanthin, chlorophyll A and C bound non-covalently by fucoxanthin chlorophyll proteins (FCPs). The ratio of pigments in this LHC is; fucoxanthin: chlorophyll C: chlorophyll A; (0.6-1): (0.1-0.3): (1).

The protein localises to the plastid. The protein resides in the chloroplast thylakoid membrane. Its function is as follows. The light-harvesting complex (LHC) functions as a light receptor, it captures and delivers excitation energy to photosystems with which it is closely associated. Energy is transferred from the carotenoid and chlorophyll C (or B) to chlorophyll A and the photosynthetic reaction centers where it is used to synthesize ATP and reducing power. This is Fucoxanthin-chlorophyll a-c binding protein A, chloroplastic (FCPA) from Macrocystis pyrifera (Giant kelp).